The primary structure comprises 992 residues: Translation initiation factor IF-2 (992 aa).

Disordered stretches follow at residues 154-173 (RRLRDEQAAQEAAREREREA) and 338-399 (AAPG…RPES). One can recognise a tr-type G domain in the interval 492-661 (PRAPVVTVMG…LLQAEVLELK (170 aa)). Residues 501–508 (GHVDHGKT) form a G1 region. Position 501–508 (501–508 (GHVDHGKT)) interacts with GTP. A G2 region spans residues 526-530 (GITQH). A G3 region spans residues 547 to 550 (DTPG). GTP is bound by residues 547-551 (DTPGH) and 601-604 (NKID). The segment at 601–604 (NKID) is G4. Residues 637 to 639 (SAH) are G5.

The protein belongs to the TRAFAC class translation factor GTPase superfamily. Classic translation factor GTPase family. IF-2 subfamily.

The protein resides in the cytoplasm. Its function is as follows. One of the essential components for the initiation of protein synthesis. Protects formylmethionyl-tRNA from spontaneous hydrolysis and promotes its binding to the 30S ribosomal subunits. Also involved in the hydrolysis of GTP during the formation of the 70S ribosomal complex. This Polaromonas naphthalenivorans (strain CJ2) protein is Translation initiation factor IF-2.